A 558-amino-acid chain; its full sequence is Inositol-3-phosphate synthase (558 aa).

The interval Met1–Glu34 is disordered. 25 residues coordinate NAD(+): Gly99, Gly100, Asn101, Asn102, Asp174, Ser210, Ile211, Gln221, Arg224, Thr262, Ala263, Asn264, Thr265, Gly313, Ser314, Asp338, Ser341, Asn372, Asn373, Asp374, Lys387, Gly439, Asp440, Asp468, and Ser469.

Belongs to the myo-inositol 1-phosphate synthase family. Homotetramer. Requires NAD(+) as cofactor.

The protein localises to the cytoplasm. The catalysed reaction is D-glucose 6-phosphate = 1D-myo-inositol 3-phosphate. It functions in the pathway polyol metabolism; myo-inositol biosynthesis; myo-inositol from D-glucose 6-phosphate: step 1/2. Key enzyme in myo-inositol biosynthesis pathway that catalyzes the conversion of glucose 6-phosphate to 1-myo-inositol 1-phosphate in a NAD-dependent manner. Rate-limiting enzyme in the synthesis of all inositol-containing compounds. This chain is Inositol-3-phosphate synthase, found in Cryptococcus neoformans var. grubii serotype A (strain H99 / ATCC 208821 / CBS 10515 / FGSC 9487) (Filobasidiella neoformans var. grubii).